The chain runs to 563 residues: Probable trehalase (563 aa).

Substrate contacts are provided by residues Arg154, Trp161 to Asp162, Asn198, Arg207 to Gln209, Arg274 to Glu276, and Gly307. Active-site proton donor/acceptor residues include Asp309 and Glu517. Position 532 (Glu532) interacts with substrate.

It belongs to the glycosyl hydrolase 37 family.

It carries out the reaction alpha,alpha-trehalose + H2O = alpha-D-glucose + beta-D-glucose. Involved in the regulation of trehalose content by hydrolyzing trehalose to glucose. The polypeptide is Probable trehalase (Oryza sativa subsp. japonica (Rice)).